The chain runs to 156 residues: Small ribosomal subunit protein uS7 (156 aa).

It belongs to the universal ribosomal protein uS7 family. As to quaternary structure, part of the 30S ribosomal subunit. Contacts proteins S9 and S11.

In terms of biological role, one of the primary rRNA binding proteins, it binds directly to 16S rRNA where it nucleates assembly of the head domain of the 30S subunit. Is located at the subunit interface close to the decoding center, probably blocks exit of the E-site tRNA. This chain is Small ribosomal subunit protein uS7, found in Mycobacterium tuberculosis (strain CDC 1551 / Oshkosh).